The sequence spans 25 residues: Caerin-2.4 (25 aa).

Expressed by the skin parotoid and/or rostral glands.

The protein resides in the secreted. Functionally, antibacterial peptide, that adopts an alpha helical conformation which can disrupt bacterial membranes. Each caerin displays a different antimicrobial specificity. The sequence is that of Caerin-2.4 from Ranoidea caerulea (Green tree frog).